The sequence spans 364 residues: 3-dehydroquinate synthase (364 aa).

Residues 75–80 (DGEQYK), 109–113 (GVIGD), 133–134 (TT), Lys146, Lys155, and 173–176 (TLDT) each bind NAD(+). Zn(2+) is bound by residues Glu188, His251, and His268.

It belongs to the sugar phosphate cyclases superfamily. Dehydroquinate synthase family. Co(2+) serves as cofactor. It depends on Zn(2+) as a cofactor. Requires NAD(+) as cofactor.

It is found in the cytoplasm. It catalyses the reaction 7-phospho-2-dehydro-3-deoxy-D-arabino-heptonate = 3-dehydroquinate + phosphate. It functions in the pathway metabolic intermediate biosynthesis; chorismate biosynthesis; chorismate from D-erythrose 4-phosphate and phosphoenolpyruvate: step 2/7. Catalyzes the conversion of 3-deoxy-D-arabino-heptulosonate 7-phosphate (DAHP) to dehydroquinate (DHQ). The chain is 3-dehydroquinate synthase from Dechloromonas aromatica (strain RCB).